Reading from the N-terminus, the 186-residue chain is UPF0397 protein lp_0150 (186 aa).

Transmembrane regions (helical) follow at residues 12-32, 45-65, 76-96, 112-132, and 151-171; these read VVAT…VAIP, GFLA…AVFI, GSPW…FGLA, LVWF…LLAP, and VITW…LLVL.

It belongs to the UPF0397 family.

It is found in the cell membrane. This Lactiplantibacillus plantarum (strain ATCC BAA-793 / NCIMB 8826 / WCFS1) (Lactobacillus plantarum) protein is UPF0397 protein lp_0150.